Consider the following 162-residue polypeptide: Nucleotide-binding protein Anae109_0095 (162 aa).

The protein belongs to the YajQ family.

Its function is as follows. Nucleotide-binding protein. This chain is Nucleotide-binding protein Anae109_0095, found in Anaeromyxobacter sp. (strain Fw109-5).